The following is a 246-amino-acid chain: Bis(5'-nucleosyl)-tetraphosphatase PrpE [asymmetrical] (246 aa).

Belongs to the PrpE family. Ni(2+) serves as cofactor.

It carries out the reaction P(1),P(4)-bis(5'-guanosyl) tetraphosphate + H2O = GMP + GTP + 2 H(+). In terms of biological role, asymmetrically hydrolyzes Ap4p to yield AMP and ATP. The sequence is that of Bis(5'-nucleosyl)-tetraphosphatase PrpE [asymmetrical] from Bacillus cereus (strain AH820).